Consider the following 325-residue polypeptide: Odorant receptor 131-2 (325 aa).

The Extracellular portion of the chain corresponds to 1–22; sequence MNSTSNSSLGNTFISKTLKEKS. N2 and N6 each carry an N-linked (GlcNAc...) asparagine glycan. A helical transmembrane segment spans residues 23–43; sequence LTVQVLVGILLYVNGLMIFTF. The Cytoplasmic segment spans residues 44–54; it reads LKKETFRDTRY. A helical transmembrane segment spans residues 55-75; it reads ILFAQTLFVDSALMLFADLTL. Over 76–91 the chain is Extracellular; sequence VGSAYELFIHIISCYI. A disulfide bridge links C89 with C170. Residues 92-112 traverse the membrane as a helical segment; the sequence is FCTVMALLSICSPVTLVAMCL. At 113 to 135 the chain is on the cytoplasmic side; the sequence is ERYVAICLPLRHASISSPKNTIN. A helical transmembrane segment spans residues 136 to 156; that stretch reads GLLIIWGVSSVIPLFIFIVSF. Residues 157-190 are Extracellular-facing; it reads TYTPPNAMNSYVVCSNDVMFQVKWLAEMRALSQQ. A helical membrane pass occupies residues 191–211; that stretch reads LLFVIMLCIVGSTYIKIMVAA. Topologically, residues 212–227 are cytoplasmic; sequence KSASAENKKSTYKGLR. A helical membrane pass occupies residues 228 to 248; the sequence is TVILHGLQLILGMMQLITPYI. At 249-267 the chain is on the extracellular side; the sequence is DILTLKVDIMLFINVKFSN. Residues 268-285 traverse the membrane as a helical segment; it reads FMLFWIFPRCLSPLVYGL. The Cytoplasmic segment spans residues 286 to 325; sequence RDKKFYNALKYYAFCGIYVCKKHKIKDSKTIRGAVSIAIY.

The protein belongs to the G-protein coupled receptor 1 family. In terms of assembly, homodimer. Monomer.

The protein resides in the cell membrane. Its subcellular location is the cytoplasm. Functionally, probable olfactory receptor. The polypeptide is Odorant receptor 131-2 (Danio rerio (Zebrafish)).